A 310-amino-acid chain; its full sequence is U-megalopygitoxin(8)-Mo15 (310 aa).

The first 27 residues, 1 to 27, serve as a signal peptide directing secretion; sequence MARFSSKNLTKLFQYLVLSLLSPVAFG.

Belongs to the megalysin family. Post-translationally, contains 3 disulfide bonds. As to expression, expressed by the venom apparatus.

The protein resides in the secreted. Its subcellular location is the target cell membrane. Functionally, may function as a large pore-forming protein. This Megalopyge opercularis (Southern flannel moth) protein is U-megalopygitoxin(8)-Mo15.